Here is a 269-residue protein sequence, read N- to C-terminus: Shikimate dehydrogenase (NADP(+)) (269 aa).

Shikimate contacts are provided by residues 14–16 (SKS) and Thr61. The Proton acceptor role is filled by Lys65. An NADP(+)-binding site is contributed by Glu77. The shikimate site is built by Asn86 and Asp102. NADP(+) is bound by residues 126 to 130 (GAGGA), 150 to 155 (NRTYEK), and Met213. Tyr215 provides a ligand contact to shikimate. NADP(+) is bound at residue Gly237.

The protein belongs to the shikimate dehydrogenase family. As to quaternary structure, homodimer.

The catalysed reaction is shikimate + NADP(+) = 3-dehydroshikimate + NADPH + H(+). The protein operates within metabolic intermediate biosynthesis; chorismate biosynthesis; chorismate from D-erythrose 4-phosphate and phosphoenolpyruvate: step 4/7. In terms of biological role, involved in the biosynthesis of the chorismate, which leads to the biosynthesis of aromatic amino acids. Catalyzes the reversible NADPH linked reduction of 3-dehydroshikimate (DHSA) to yield shikimate (SA). This chain is Shikimate dehydrogenase (NADP(+)), found in Aliivibrio fischeri (strain ATCC 700601 / ES114) (Vibrio fischeri).